The sequence spans 161 residues: Abscisic acid receptor PYL11 (161 aa).

An START-like region spans residues 3 to 154 (TSQKYHTCGS…NLKSLAKLSE (152 aa)). Abscisate-binding positions include lysine 39, 68–73 (AEFSRE), 95–101 (RLVNYRS), and glutamate 119. The Gate loop motif lies at 64-68 (SGLPA). A Latch loop motif is present at residues 94 to 96 (HRL).

The protein belongs to the PYR/PYL/RCAR abscisic acid intracellular receptor family. As to quaternary structure, homodimer. Binds ABA on one subunit only. Interacts with PP2Cs. Binds to CARs protein in an ABA-independent manner, both at the plasma membrane and in the nucleus. Interacts with I-2 and TOPP1.

Its subcellular location is the cytoplasm. It is found in the nucleus. It localises to the cell membrane. In terms of biological role, receptor for abscisic acid (ABA) required for ABA-mediated responses such as stomatal closure and germination inhibition. Inhibits the activity of group-A protein phosphatases type 2C (PP2Cs) when activated by ABA. Suppresses the phosphatase activity of TOPP1 in a dose-dependent manner in vitro. In Arabidopsis thaliana (Mouse-ear cress), this protein is Abscisic acid receptor PYL11 (PYL11).